A 275-amino-acid chain; its full sequence is MAAELEYESVLCVKPDVSVYRIPPRASNRGYRASDWKLDQPDWTGRLRITSKGKIAYIKLEDKVSGELFAQAPVEQYPGIAVETVTDSSRYFVIRIQDGTGRSAFIGIGFTDRGDAFDFNVSLQDHFKWVKQETEISKESQEMDNRPKLDLGFKEGQTIKLSIGNITAKKGGASKPRASGTGGLSLLPPPPGGKVTIPPPSSSVAISNHVTPPPIPKSNHGGNDSDILLDLDSPAPVSTSAPAPVSTSNDLWGDFSTASSSVPNQAPQPSNWVQF.

Residues 168–275 (AKKGGASKPR…APQPSNWVQF (108 aa)) are disordered. The segment covering 187–201 (LPPPPGGKVTIPPPS) has biased composition (pro residues). Phosphothreonine is present on Thr-211. Residues 233–248 (SPAPVSTSAPAPVSTS) are compositionally biased toward low complexity. 2 short sequence motifs (WXXF motif) span residues 252-255 (WGDF) and 272-275 (WVQF). Polar residues predominate over residues 256-275 (STASSSVPNQAPQPSNWVQF).

It belongs to the NECAP family. Interacts with AP1G1 and AP2A1 components of the adapter protein complexes AP-1 and AP-2. Interacts with the GAE domain proteins GGA1, GGA2 and GGA3. As to expression, expressed primarily in brain (at protein level).

The protein resides in the cytoplasmic vesicle. It is found in the clathrin-coated vesicle membrane. It localises to the cell membrane. Functionally, involved in endocytosis. In Mus musculus (Mouse), this protein is Adaptin ear-binding coat-associated protein 1 (Necap1).